The primary structure comprises 346 residues: Probable dual-specificity RNA methyltransferase RlmN (346 aa).

Catalysis depends on E76, which acts as the Proton acceptor. The Radical SAM core domain occupies 97–329; the sequence is SYDRATICVS…TFIRKPRGRD (233 aa). A disulfide bond links C104 and C334. [4Fe-4S] cluster-binding residues include C111, C115, and C118. S-adenosyl-L-methionine contacts are provided by residues 162 to 163, S192, 215 to 217, and N291; these read GE and SLN. Catalysis depends on C334, which acts as the S-methylcysteine intermediate.

It belongs to the radical SAM superfamily. RlmN family. [4Fe-4S] cluster is required as a cofactor.

It localises to the cytoplasm. It carries out the reaction adenosine(2503) in 23S rRNA + 2 reduced [2Fe-2S]-[ferredoxin] + 2 S-adenosyl-L-methionine = 2-methyladenosine(2503) in 23S rRNA + 5'-deoxyadenosine + L-methionine + 2 oxidized [2Fe-2S]-[ferredoxin] + S-adenosyl-L-homocysteine. It catalyses the reaction adenosine(37) in tRNA + 2 reduced [2Fe-2S]-[ferredoxin] + 2 S-adenosyl-L-methionine = 2-methyladenosine(37) in tRNA + 5'-deoxyadenosine + L-methionine + 2 oxidized [2Fe-2S]-[ferredoxin] + S-adenosyl-L-homocysteine. Functionally, specifically methylates position 2 of adenine 2503 in 23S rRNA and position 2 of adenine 37 in tRNAs. This is Probable dual-specificity RNA methyltransferase RlmN from Koribacter versatilis (strain Ellin345).